The chain runs to 112 residues: Histone H2A, sperm (112 aa).

N5-methylglutamine is present on Q91. K106 participates in a covalent cross-link: Glycyl lysine isopeptide (Lys-Gly) (interchain with G-Cter in ubiquitin).

This sequence belongs to the histone H2A family. The nucleosome is a histone octamer containing two molecules each of H2A, H2B, H3 and H4 assembled in one H3-H4 heterotetramer and two H2A-H2B heterodimers. The octamer wraps approximately 147 bp of DNA. Monoubiquitination gives a specific tag for epigenetic transcriptional repression.

Its subcellular location is the nucleus. The protein localises to the chromosome. Core component of nucleosome. Nucleosomes wrap and compact DNA into chromatin, limiting DNA accessibility to the cellular machineries which require DNA as a template. Histones thereby play a central role in transcription regulation, DNA repair, DNA replication and chromosomal stability. DNA accessibility is regulated via a complex set of post-translational modifications of histones, also called histone code, and nucleosome remodeling. The chain is Histone H2A, sperm from Lytechinus pictus (Painted sea urchin).